A 451-amino-acid chain; its full sequence is DNA-directed RNA polymerase subunit Rpo1C (451 aa).

A unknown region spans residues 1-68; the sequence is MQDIIGKIED…DDDELLDAVE (68 aa). The DNA-directed RNA polymerase subunit Rpo1C stretch occupies residues 69 to 451; the sequence is DDYQRILKVQ…SVSVVMKERK (383 aa).

The protein belongs to the RNA polymerase beta' chain family. Part of the RNA polymerase complex.

The protein resides in the cytoplasm. The catalysed reaction is RNA(n) + a ribonucleoside 5'-triphosphate = RNA(n+1) + diphosphate. Functionally, DNA-dependent RNA polymerase (RNAP) catalyzes the transcription of DNA into RNA using the four ribonucleoside triphosphates as substrates. Forms part of the jaw domain. The sequence is that of DNA-directed RNA polymerase subunit Rpo1C from Methanothermobacter thermautotrophicus (strain ATCC 29096 / DSM 1053 / JCM 10044 / NBRC 100330 / Delta H) (Methanobacterium thermoautotrophicum).